Consider the following 750-residue polypeptide: Ribosomal RNA large subunit methyltransferase K/L (750 aa).

The THUMP domain occupies 46 to 157 (TAYRLCLWSR…RGEAILSLDL (112 aa)).

The protein belongs to the methyltransferase superfamily. RlmKL family.

The protein resides in the cytoplasm. It carries out the reaction guanosine(2445) in 23S rRNA + S-adenosyl-L-methionine = N(2)-methylguanosine(2445) in 23S rRNA + S-adenosyl-L-homocysteine + H(+). It catalyses the reaction guanosine(2069) in 23S rRNA + S-adenosyl-L-methionine = N(2)-methylguanosine(2069) in 23S rRNA + S-adenosyl-L-homocysteine + H(+). Specifically methylates the guanine in position 2445 (m2G2445) and the guanine in position 2069 (m7G2069) of 23S rRNA. This chain is Ribosomal RNA large subunit methyltransferase K/L, found in Pseudomonas syringae pv. syringae (strain B728a).